We begin with the raw amino-acid sequence, 360 residues long: MSLIRLNIDSFRNIQLAQLSPSSGINLIYGQNGSGKTSILEAIYFLGMGRSFRSHLSQRVINNEQDKLTLFATLNLPRGDSKIGLRRFRSGETEVKIDGEKVKRLSTLAETLPIQVITPESFSLLFEGPKSRRQFIDWGAFHSDPQFYAAWVNVRRVLKQRNQLLRNNSSYEQIQYWDREFVRYTEQVTEIRNRYVDSLNELLKGIIGEFLPQVDVKVSFTRGWDSKTDFAQLLESQYPRDLATGHTVSGPHKADLRLRVGSLPAQDALSRGQLKLLVCALRIAQGKLLKQQIDKHSIYLVDDLPSELDAQHRQLLLKQLVDTGAQVFVTAIEPAAIVDSLHTPPSRMFHVEQGRVTVIE.

30–37 is a binding site for ATP; the sequence is GQNGSGKT.

Belongs to the RecF family.

It localises to the cytoplasm. In terms of biological role, the RecF protein is involved in DNA metabolism; it is required for DNA replication and normal SOS inducibility. RecF binds preferentially to single-stranded, linear DNA. It also seems to bind ATP. In Shewanella sp. (strain MR-7), this protein is DNA replication and repair protein RecF.